Here is a 252-residue protein sequence, read N- to C-terminus: Triosephosphate isomerase (252 aa).

10 to 12 (NWK) provides a ligand contact to substrate. Residue His-96 is the Electrophile of the active site. The active-site Proton acceptor is Glu-168. Residues Gly-174, Ser-214, and 235-236 (GG) each bind substrate.

This sequence belongs to the triosephosphate isomerase family. As to quaternary structure, homodimer.

The protein localises to the cytoplasm. It catalyses the reaction D-glyceraldehyde 3-phosphate = dihydroxyacetone phosphate. Its pathway is carbohydrate biosynthesis; gluconeogenesis. It functions in the pathway carbohydrate degradation; glycolysis; D-glyceraldehyde 3-phosphate from glycerone phosphate: step 1/1. Its function is as follows. Seems to be capable of enhancing bacteriocin synthesis. In terms of biological role, involved in the gluconeogenesis. Catalyzes stereospecifically the conversion of dihydroxyacetone phosphate (DHAP) to D-glyceraldehyde-3-phosphate (G3P). The polypeptide is Triosephosphate isomerase (Lactobacillus delbrueckii subsp. lactis).